The primary structure comprises 639 residues: Mediator of RNA polymerase II transcription subunit 17 (639 aa).

Over residues 32–43 the composition is skewed to polar residues; that stretch reads ASATVTTNGTTA. Disordered regions lie at residues 32–68 and 130–159; these read ASATVTTNGTTADSSEDSGSQQSVSSAPIQQNSEEHS and MGDADEESDLKPQEITDDDSNARLKPNNDS. The segment covering 48-57 has biased composition (low complexity); that stretch reads DSGSQQSVSS. The span at 58 to 68 shows a compositional bias: polar residues; it reads APIQQNSEEHS. Residues 245–271 are a coiled coil; the sequence is WKLRSLEDSKALLKENYAKLQKSLEVE.

Belongs to the Mediator complex subunit 17 family. As to quaternary structure, component of the Mediator complex.

It is found in the nucleus. Functionally, component of the Mediator complex, a coactivator involved in the regulated transcription of nearly all RNA polymerase II-dependent genes. Mediator functions as a bridge to convey information from gene-specific regulatory proteins to the basal RNA polymerase II transcription machinery. Mediator is recruited to promoters by direct interactions with regulatory proteins and serves as a scaffold for the assembly of a functional preinitiation complex with RNA polymerase II and the general transcription factors. The protein is Mediator of RNA polymerase II transcription subunit 17 (SRB4) of Eremothecium gossypii (strain ATCC 10895 / CBS 109.51 / FGSC 9923 / NRRL Y-1056) (Yeast).